The sequence spans 173 residues: tRNA-specific adenosine deaminase (173 aa).

The CMP/dCMP-type deaminase domain maps to 9 to 121 (EFDEKMMRYA…DYKTGAIGSR (113 aa)). His61 lines the Zn(2+) pocket. Glu63 functions as the Proton donor in the catalytic mechanism. Zn(2+)-binding residues include Cys91 and Cys94.

Belongs to the cytidine and deoxycytidylate deaminase family. As to quaternary structure, homodimer. Zn(2+) is required as a cofactor.

The catalysed reaction is adenosine(34) in tRNA + H2O + H(+) = inosine(34) in tRNA + NH4(+). Functionally, catalyzes the deamination of adenosine to inosine at the wobble position 34 of tRNA(Arg2). The chain is tRNA-specific adenosine deaminase from Haemophilus influenzae (strain ATCC 51907 / DSM 11121 / KW20 / Rd).